The sequence spans 565 residues: Dihydroxy-acid dehydratase (565 aa).

A [2Fe-2S] cluster-binding site is contributed by C53. D85 serves as a coordination point for Mg(2+). C126 provides a ligand contact to [2Fe-2S] cluster. Positions 127 and 128 each coordinate Mg(2+). K128 bears the N6-carboxylysine mark. A [2Fe-2S] cluster-binding site is contributed by C198. E450 lines the Mg(2+) pocket. S476 serves as the catalytic Proton acceptor.

This sequence belongs to the IlvD/Edd family. Homodimer. It depends on [2Fe-2S] cluster as a cofactor. Mg(2+) serves as cofactor.

It catalyses the reaction (2R)-2,3-dihydroxy-3-methylbutanoate = 3-methyl-2-oxobutanoate + H2O. The enzyme catalyses (2R,3R)-2,3-dihydroxy-3-methylpentanoate = (S)-3-methyl-2-oxopentanoate + H2O. Its pathway is amino-acid biosynthesis; L-isoleucine biosynthesis; L-isoleucine from 2-oxobutanoate: step 3/4. The protein operates within amino-acid biosynthesis; L-valine biosynthesis; L-valine from pyruvate: step 3/4. Functionally, functions in the biosynthesis of branched-chain amino acids. Catalyzes the dehydration of (2R,3R)-2,3-dihydroxy-3-methylpentanoate (2,3-dihydroxy-3-methylvalerate) into 2-oxo-3-methylpentanoate (2-oxo-3-methylvalerate) and of (2R)-2,3-dihydroxy-3-methylbutanoate (2,3-dihydroxyisovalerate) into 2-oxo-3-methylbutanoate (2-oxoisovalerate), the penultimate precursor to L-isoleucine and L-valine, respectively. The polypeptide is Dihydroxy-acid dehydratase (Synechococcus sp. (strain JA-2-3B'a(2-13)) (Cyanobacteria bacterium Yellowstone B-Prime)).